We begin with the raw amino-acid sequence, 145 residues long: 3-dehydroquinate dehydratase (145 aa).

The active-site Proton acceptor is the Tyr23. Residues Asn75, His81, and Asp88 each contribute to the substrate site. His101 functions as the Proton donor in the catalytic mechanism. Residues 102-103 (IS) and Arg112 each bind substrate.

It belongs to the type-II 3-dehydroquinase family. As to quaternary structure, homododecamer.

The catalysed reaction is 3-dehydroquinate = 3-dehydroshikimate + H2O. It functions in the pathway metabolic intermediate biosynthesis; chorismate biosynthesis; chorismate from D-erythrose 4-phosphate and phosphoenolpyruvate: step 3/7. Its function is as follows. Catalyzes a trans-dehydration via an enolate intermediate. This chain is 3-dehydroquinate dehydratase, found in Caldicellulosiruptor saccharolyticus (strain ATCC 43494 / DSM 8903 / Tp8T 6331).